The sequence spans 367 residues: tRNA-specific 2-thiouridylase MnmA (367 aa).

ATP contacts are provided by residues A14–S21 and L40. C108 acts as the Nucleophile in catalysis. C108 and C204 are joined by a disulfide. G132 contacts ATP. An interaction with tRNA region spans residues K154 to Q156. C204 (cysteine persulfide intermediate) is an active-site residue.

The protein belongs to the MnmA/TRMU family.

The protein localises to the cytoplasm. The enzyme catalyses S-sulfanyl-L-cysteinyl-[protein] + uridine(34) in tRNA + AH2 + ATP = 2-thiouridine(34) in tRNA + L-cysteinyl-[protein] + A + AMP + diphosphate + H(+). In terms of biological role, catalyzes the 2-thiolation of uridine at the wobble position (U34) of tRNA, leading to the formation of s(2)U34. The sequence is that of tRNA-specific 2-thiouridylase MnmA from Rickettsia bellii (strain OSU 85-389).